The sequence spans 103 residues: Cell division protein FtsB (103 aa).

Over 1 to 3 the chain is Cytoplasmic; sequence MGK. Residues 4 to 21 form a helical membrane-spanning segment; the sequence is LTLLLLAILVWLQYSLWF. Over 22–103 the chain is Periplasmic; sequence GKNGIHDYTR…RAQSAGQNNR (82 aa). Residues 31–71 adopt a coiled-coil conformation; it reads RVNNDVAAQQATNAKLKARNDQLFAEIDDLNGGQEALEERA.

This sequence belongs to the FtsB family. In terms of assembly, part of a complex composed of FtsB, FtsL and FtsQ.

It is found in the cell inner membrane. In terms of biological role, essential cell division protein. May link together the upstream cell division proteins, which are predominantly cytoplasmic, with the downstream cell division proteins, which are predominantly periplasmic. In Escherichia coli O81 (strain ED1a), this protein is Cell division protein FtsB.